The primary structure comprises 341 residues: Serpentine receptor class beta-1 (341 aa).

7 helical membrane-spanning segments follow: residues 22–42 (AQFW…IFLL), 66–86 (FLFA…PLFI), 102–122 (GQLS…GFSI), 141–161 (LGPL…FTVF), 188–208 (CWIL…ILLV), 240–260 (LIVS…TIFI), and 279–299 (GVYI…IKAL).

This sequence belongs to the nematode receptor-like protein srb family.

The protein localises to the membrane. The chain is Serpentine receptor class beta-1 (srb-1) from Caenorhabditis elegans.